The sequence spans 544 residues: Chaperonin GroEL 2 (544 aa).

ATP is bound by residues Thr-29–Pro-32, Asp-86–Thr-90, Gly-413, Asn-479–Ala-481, and Asp-495.

Belongs to the chaperonin (HSP60) family. As to quaternary structure, forms a cylinder of 14 subunits composed of two heptameric rings stacked back-to-back. Interacts with the co-chaperonin GroES.

The protein localises to the cytoplasm. It carries out the reaction ATP + H2O + a folded polypeptide = ADP + phosphate + an unfolded polypeptide.. Functionally, together with its co-chaperonin GroES, plays an essential role in assisting protein folding. The GroEL-GroES system forms a nano-cage that allows encapsulation of the non-native substrate proteins and provides a physical environment optimized to promote and accelerate protein folding. This chain is Chaperonin GroEL 2, found in Prochlorococcus marinus (strain MIT 9313).